The primary structure comprises 429 residues: uncharacterized protein (429 aa).

Positions 1-12 are enriched in basic and acidic residues; that stretch reads MSDSKEDIRNGQ. Disordered regions lie at residues 1 to 63, 257 to 306, and 320 to 429; these read MSDS…APEA, RSRA…SDRM, and YRGY…SDSE. Over residues 328–362 the composition is skewed to acidic residues; sequence EENEEDDLGDFIAEEEEEEEQEEEQEEDEEDEEEV. The segment covering 369–378 has biased composition (basic and acidic residues); it reads KGFDADKEAS.

This sequence belongs to the LEO1 family.

The protein resides in the nucleus. This is an uncharacterized protein from Schizosaccharomyces pombe (strain 972 / ATCC 24843) (Fission yeast).